We begin with the raw amino-acid sequence, 249 residues long: Ribosomal RNA small subunit methyltransferase J (249 aa).

S-adenosyl-L-methionine contacts are provided by residues 101-102 (RD), 117-118 (ER), and Asp-171.

It belongs to the methyltransferase superfamily. RsmJ family.

It is found in the cytoplasm. The catalysed reaction is guanosine(1516) in 16S rRNA + S-adenosyl-L-methionine = N(2)-methylguanosine(1516) in 16S rRNA + S-adenosyl-L-homocysteine + H(+). In terms of biological role, specifically methylates the guanosine in position 1516 of 16S rRNA. The polypeptide is Ribosomal RNA small subunit methyltransferase J (Tolumonas auensis (strain DSM 9187 / NBRC 110442 / TA 4)).